A 299-amino-acid chain; its full sequence is Ribosomal RNA small subunit methyltransferase H 1 (299 aa).

Residues 31–33 (GGH), Asp-50, Phe-76, Asp-97, and Gln-104 each bind S-adenosyl-L-methionine.

Belongs to the methyltransferase superfamily. RsmH family.

The protein resides in the cytoplasm. It catalyses the reaction cytidine(1402) in 16S rRNA + S-adenosyl-L-methionine = N(4)-methylcytidine(1402) in 16S rRNA + S-adenosyl-L-homocysteine + H(+). In terms of biological role, specifically methylates the N4 position of cytidine in position 1402 (C1402) of 16S rRNA. The sequence is that of Ribosomal RNA small subunit methyltransferase H 1 from Acholeplasma laidlawii (strain PG-8A).